A 132-amino-acid polypeptide reads, in one-letter code: Small ribosomal subunit protein uS9 (132 aa).

This sequence belongs to the universal ribosomal protein uS9 family.

This is Small ribosomal subunit protein uS9 (rpsI) from Mycoplasma pneumoniae (strain ATCC 29342 / M129 / Subtype 1) (Mycoplasmoides pneumoniae).